The following is a 248-amino-acid chain: Probable pyridoxal 5'-phosphate synthase subunit pdx2 (248 aa).

Glycine 70–serine 72 contacts L-glutamine. The active-site Nucleophile is the cysteine 106. Residues arginine 136 and isoleucine 174–arginine 175 each bind L-glutamine. Active-site charge relay system residues include histidine 221 and glutamate 223.

Belongs to the glutaminase PdxT/SNO family.

The enzyme catalyses aldehydo-D-ribose 5-phosphate + D-glyceraldehyde 3-phosphate + L-glutamine = pyridoxal 5'-phosphate + L-glutamate + phosphate + 3 H2O + H(+). The catalysed reaction is L-glutamine + H2O = L-glutamate + NH4(+). Its pathway is cofactor biosynthesis; pyridoxal 5'-phosphate biosynthesis. Catalyzes the hydrolysis of glutamine to glutamate and ammonia as part of the biosynthesis of pyridoxal 5'-phosphate. The resulting ammonia molecule is channeled to the active site of pdx1. The sequence is that of Probable pyridoxal 5'-phosphate synthase subunit pdx2 from Dictyostelium discoideum (Social amoeba).